The primary structure comprises 542 residues: Probable protein kinase UbiB (542 aa).

In terms of domain architecture, Protein kinase spans 123–505 (DFDEQALASA…ADNKTYNVKM (383 aa)). ATP-binding positions include 129–137 (LASASIAQV) and Lys156. The active-site Proton acceptor is the Asp291. A helical membrane pass occupies residues 506–526 (IIMGSIILSLLWQFNSLPLWL).

It belongs to the ABC1 family. UbiB subfamily.

The protein resides in the cell inner membrane. The protein operates within cofactor biosynthesis; ubiquinone biosynthesis [regulation]. In terms of biological role, is probably a protein kinase regulator of UbiI activity which is involved in aerobic coenzyme Q (ubiquinone) biosynthesis. The polypeptide is Probable protein kinase UbiB (Haemophilus ducreyi (strain 35000HP / ATCC 700724)).